A 200-amino-acid chain; its full sequence is Pyridoxal 5'-phosphate synthase subunit PdxT (200 aa).

50 to 52 (GES) is an L-glutamine binding site. Catalysis depends on C82, which acts as the Nucleophile. Residues R110 and 138 to 139 (IR) each bind L-glutamine. Catalysis depends on charge relay system residues H174 and E176.

The protein belongs to the glutaminase PdxT/SNO family. In the presence of PdxS, forms a dodecamer of heterodimers. Only shows activity in the heterodimer.

It catalyses the reaction aldehydo-D-ribose 5-phosphate + D-glyceraldehyde 3-phosphate + L-glutamine = pyridoxal 5'-phosphate + L-glutamate + phosphate + 3 H2O + H(+). The enzyme catalyses L-glutamine + H2O = L-glutamate + NH4(+). Its pathway is cofactor biosynthesis; pyridoxal 5'-phosphate biosynthesis. Catalyzes the hydrolysis of glutamine to glutamate and ammonia as part of the biosynthesis of pyridoxal 5'-phosphate. The resulting ammonia molecule is channeled to the active site of PdxS. The chain is Pyridoxal 5'-phosphate synthase subunit PdxT from Oceanobacillus iheyensis (strain DSM 14371 / CIP 107618 / JCM 11309 / KCTC 3954 / HTE831).